The primary structure comprises 85 residues: Large ribosomal subunit protein bL27 (85 aa).

Positions 1–22 are disordered; that stretch reads MAHKKAGGSTKNGRDSESKRLG.

The protein belongs to the bacterial ribosomal protein bL27 family.

The protein is Large ribosomal subunit protein bL27 of Alteromonas mediterranea (strain DSM 17117 / CIP 110805 / LMG 28347 / Deep ecotype).